Consider the following 166-residue polypeptide: Large ribosomal subunit protein uL10 (166 aa).

This sequence belongs to the universal ribosomal protein uL10 family. Part of the ribosomal stalk of the 50S ribosomal subunit. The N-terminus interacts with L11 and the large rRNA to form the base of the stalk. The C-terminus forms an elongated spine to which L12 dimers bind in a sequential fashion forming a multimeric L10(L12)X complex.

In terms of biological role, forms part of the ribosomal stalk, playing a central role in the interaction of the ribosome with GTP-bound translation factors. In Streptococcus pyogenes serotype M28 (strain MGAS6180), this protein is Large ribosomal subunit protein uL10.